A 947-amino-acid chain; its full sequence is Mitogen-activated protein kinase kinase kinase 14 (947 aa).

Disordered stretches follow at residues 1-37 and 135-171; these read MAVMEMACPGAPGSAVGQQKELPKAKEKTPPLGKKQS and KGKRRSKARKKRKKKSSKSLAHAGVALAKPLPRTPEQ. The segment covering 135 to 151 has biased composition (basic residues); that stretch reads KGKRRSKARKKRKKKSS. A Protein kinase domain is found at 400–655; the sequence is ATHQLRLGRG…ELGGKVNRAL (256 aa). Positions 401 to 653 are interaction with ZFP91; it reads THQLRLGRGS…AAELGGKVNR (253 aa). Residues 406–414 and Lys-429 contribute to the ATP site; that span reads LGRGSFGEV. Asp-515 functions as the Proton acceptor in the catalytic mechanism. Thr-559 bears the Phosphothreonine mark. Disordered regions lie at residues 662–766 and 805–830; these read KSPW…ATVP and LSDDSEKNPSKASQSSRDTLSSGVHS. The span at 665–674 shows a compositional bias: basic and acidic residues; sequence WRGEYKEPRH. Residues 713 to 727 show a composition bias toward pro residues; sequence LQPPLPPEPPEPNKS. Residues 741–752 show a composition bias toward low complexity; the sequence is EPLPLSSLEPAP. Positions 814 to 829 are enriched in polar residues; that stretch reads SKASQSSRDTLSSGVH.

It belongs to the protein kinase superfamily. STE Ser/Thr protein kinase family. MAP kinase kinase kinase subfamily. In terms of assembly, interacts with TRAF2, TRAF5, TRAF6, IKKA and NFKB2/P100. Interacts with TRAF3 and PELI3. Interacts with NIBP; the interaction is direct. Interacts with ARRB1 and ARRB2. Interacts with GRB10. Interacts with ZFP91. Interacts with NLRP12; this interaction promotes proteasomal degradation of MAP3K14. Directly interacts with DDX3X. Interacts (via C-terminus and kinase domain) with PPPC3A (via N-terminus) and PPP3CB. Post-translationally, autophosphorylated. Phosphorylation at Thr-559 is required to activate its kinase activity and 'Lys-63'-linked polyubiquitination. Phosphorylated by CHUK/IKKA leading to MAP3K14 destabilization. Ubiquitinated. Undergoes both 'Lys-48'- and 'Lys-63'-linked polyubiquitination. 'Lys-48'-linked polyubiquitination leads to its degradation by the proteasome, while 'Lys-63'-linked polyubiquitination stabilizes and activates it. Weakly expressed in testis, small intestine, spleen, thymus, peripheral blood leukocytes, prostate, ovary and colon.

The protein localises to the cytoplasm. It catalyses the reaction L-seryl-[protein] + ATP = O-phospho-L-seryl-[protein] + ADP + H(+). The catalysed reaction is L-threonyl-[protein] + ATP = O-phospho-L-threonyl-[protein] + ADP + H(+). In terms of biological role, lymphotoxin beta-activated kinase which seems to be exclusively involved in the activation of NF-kappa-B and its transcriptional activity. Phosphorylates CHUK/IKKA, thereby promoting proteolytic processing of NFKB2/P100, which leads to NF-kappa-B activation via the non-canonical pathway. Has an essential role in the non-canonical NF-kappa-B signaling that regulates genes encoding molecules involved in B-cell survival, lymphoid organogenesis, and immune response. Could act in a receptor-selective manner. The chain is Mitogen-activated protein kinase kinase kinase 14 from Homo sapiens (Human).